The chain runs to 222 residues: Probable GTP-binding protein EngB (222 aa).

The region spanning 23-217 (NASEIVFLGR…REEIVKYTLG (195 aa)) is the EngB-type G domain. GTP contacts are provided by residues 31-38 (GRSNVGKS), 57-61 (GKTQL), 82-85 (DLPG), 152-155 (TKAD), and 191-193 (FSA). Serine 38 and threonine 59 together coordinate Mg(2+).

The protein belongs to the TRAFAC class TrmE-Era-EngA-EngB-Septin-like GTPase superfamily. EngB GTPase family. Mg(2+) is required as a cofactor.

Functionally, necessary for normal cell division and for the maintenance of normal septation. This Helicobacter hepaticus (strain ATCC 51449 / 3B1) protein is Probable GTP-binding protein EngB.